The sequence spans 86 residues: Anti-adapter protein IraP (86 aa).

Positions 1–36 (MKNLISELLLRLAQKEEESKELVAQVEALEIIVTAM) form a coiled coil.

The protein belongs to the IraP family. As to quaternary structure, interacts with RssB.

The protein resides in the cytoplasm. In terms of biological role, inhibits RpoS proteolysis by regulating RssB activity, thereby increasing the stability of the sigma stress factor RpoS especially during phosphate starvation, but also in stationary phase and during nitrogen starvation. Its effect on RpoS stability is due to its interaction with RssB, which probably blocks the interaction of RssB with RpoS, and the consequent delivery of the RssB-RpoS complex to the ClpXP protein degradation pathway. The protein is Anti-adapter protein IraP of Citrobacter koseri (strain ATCC BAA-895 / CDC 4225-83 / SGSC4696).